We begin with the raw amino-acid sequence, 360 residues long: MVSKQAFLFSLGSLYLSLLFIFLLMDVYARPANNSALKVETKEKATDNKDENEILPPDHLNGVKMEMDGHLNKEFHQEVFLGKELEEFDEDSEPRRNRRKLAAIFAKVDRNEDKQISASEMQRWIMEKTEEHFQEAVNENKLHFRAVDPDGDGHVSWDEYKIKFLASKGFNEKEVAEKLKNNEDLKIDEETQEVLDNLKDRWFQADNPPPDQLLNEEEFLSFLHPEHSRGMLKFMVKEIIRDLDQDGDKKLTLSEFISLPVGTVENQQAQDIDDDWVRDRKKEYEEVIDANHDGIVTMEELEEYMDPMNEYNALNEAKQMIAVADENQDHLLSLEEILKYSEYFTGSKLMDYARNVHEEF.

Residues 1–29 form the signal peptide; sequence MVSKQAFLFSLGSLYLSLLFIFLLMDVYA. An N-linked (GlcNAc...) asparagine glycan is attached at N33. 5 consecutive EF-hand domains span residues 96–131, 135–170, 231–266, 276–311, and 312–347; these read RNRR…KTEE, EAVN…SKGF, MLKF…TVEN, WVRD…MNEY, and NALN…FTGS. D109, N111, D113, Q115, E120, D148, D150, D152, H154, E159, D244, D246, D248, K250, E255, D289, N291, D293, E300, D325, N327, D329, and E336 together coordinate Ca(2+).

This sequence belongs to the CREC family.

The protein localises to the golgi apparatus lumen. Its function is as follows. May regulate calcium-dependent activities in the endoplasmic reticulum lumen or post-ER compartment. The protein is 45 kDa calcium-binding protein (sdf4) of Xenopus laevis (African clawed frog).